The sequence spans 171 residues: Putative MucR family transcriptional regulatory protein y4pD (171 aa).

Belongs to the ros/MucR family.

This chain is Putative MucR family transcriptional regulatory protein y4pD, found in Sinorhizobium fredii (strain NBRC 101917 / NGR234).